A 299-amino-acid polypeptide reads, in one-letter code: Methylsterol monooxygenase 1-2 (299 aa).

The next 3 helical transmembrane spans lie at 39 to 59 (CHNILFLFLIFSLVPLPLVFI), 96 to 116 (FILVVGPLQLVSYPSIQMIEI), and 118 to 138 (SGLPLPSCMEIVAQLVVYFLV). Positions 132–267 (LVVYFLVEDY…FTYCDYIYGT (136 aa)) constitute a Fatty acid hydroxylase domain. Positions 147–151 (HRFFH) match the Histidine box-1 motif. Positions 160–164 (HHIHH) match the Histidine box-2 motif. The chain crosses the membrane as a helical span at residues 189-209 (TFLGPAIAPGHMITFWLWIAL). The Histidine box-3 signature appears at 239–245 (YHDYHHY).

This sequence belongs to the sterol desaturase family. In terms of assembly, interacts with ACBP1. Fe cation is required as a cofactor. As to expression, expressed in embryo sacs, pollen and trichomes. Observed in leaves, roots, siliques and flowers.

The protein localises to the endoplasmic reticulum membrane. The enzyme catalyses 4,4-dimethyl-5alpha-cholest-7-en-3beta-ol + 6 Fe(II)-[cytochrome b5] + 3 O2 + 5 H(+) = 4alpha-carboxy-4beta-methyl-5alpha-cholest-7-ene-3beta-ol + 6 Fe(III)-[cytochrome b5] + 4 H2O. It carries out the reaction 24-methylenecycloartanol + 6 Fe(II)-[cytochrome b5] + 3 O2 + 5 H(+) = 4alpha-carboxy-4beta,14alpha-dimethyl-9beta,19-cyclo-5alpha-ergost-24(24(1))-en-3beta-ol + 6 Fe(III)-[cytochrome b5] + 4 H2O. Functionally, non-heme iron oxygenase involved in sterols biosynthesis by catalyzing the removal of the first methyl group at the C-4 position. 4,4-dimethyl-9-beta,19-cyclopropylsterols such as 24-methylenecycloartanol are the preferred substrates. Acts as a rate-limiting enzyme in the sterol pathway via interaction with ACBP1; sterols serve as lipid modulators for gene expression of homeodomain-leucine zipper IV transcription factors. Together with SMO1-1, involved in the maintenance of sterol composition to balance auxin and cytokinin activities during embryogenesis. The sequence is that of Methylsterol monooxygenase 1-2 from Arabidopsis thaliana (Mouse-ear cress).